A 163-amino-acid polypeptide reads, in one-letter code: NADH-quinone oxidoreductase subunit I (163 aa).

4Fe-4S ferredoxin-type domains are found at residues 53–83 and 94–123; these read LRRY…IEAG and TLYD…LTPE. [4Fe-4S] cluster contacts are provided by Cys63, Cys66, Cys69, Cys73, Cys103, Cys106, Cys109, and Cys113.

This sequence belongs to the complex I 23 kDa subunit family. NDH-1 is composed of 14 different subunits. Subunits NuoA, H, J, K, L, M, N constitute the membrane sector of the complex. It depends on [4Fe-4S] cluster as a cofactor.

The protein resides in the cell inner membrane. The catalysed reaction is a quinone + NADH + 5 H(+)(in) = a quinol + NAD(+) + 4 H(+)(out). Functionally, NDH-1 shuttles electrons from NADH, via FMN and iron-sulfur (Fe-S) centers, to quinones in the respiratory chain. The immediate electron acceptor for the enzyme in this species is believed to be ubiquinone. Couples the redox reaction to proton translocation (for every two electrons transferred, four hydrogen ions are translocated across the cytoplasmic membrane), and thus conserves the redox energy in a proton gradient. In Coxiella burnetii (strain Dugway 5J108-111), this protein is NADH-quinone oxidoreductase subunit I.